Consider the following 391-residue polypeptide: Digeranylgeranylglycerophospholipid reductase (391 aa).

Residues Gly19, Asp38, Cys49, Ala50, Ala52, Arg99, Val123, Asp279, Gly291, and Ile292 each coordinate FAD. Position 369 (Val369) interacts with a 2,3-bis-O-(geranylgeranyl)-sn-glycerol 1-phospholipid.

Belongs to the geranylgeranyl reductase family. DGGGPL reductase subfamily. FAD serves as cofactor.

It carries out the reaction a 2,3-bis-O-phytanyl-sn-glycerol 1-phospholipid + 8 A = a 2,3-bis-O-(geranylgeranyl)-sn-glycerol 1-phospholipid + 8 AH2. The enzyme catalyses 2,3-bis-O-(phytanyl)-sn-glycerol 1-phosphate + 8 A = 2,3-bis-O-(geranylgeranyl)-sn-glycerol 1-phosphate + 8 AH2. The catalysed reaction is CDP-2,3-bis-O-(geranylgeranyl)-sn-glycerol + 8 AH2 = CDP-2,3-bis-O-(phytanyl)-sn-glycerol + 8 A. It catalyses the reaction archaetidylserine + 8 AH2 = 2,3-bis-O-phytanyl-sn-glycero-3-phospho-L-serine + 8 A. Its pathway is membrane lipid metabolism; glycerophospholipid metabolism. Is involved in the reduction of 2,3-digeranylgeranylglycerophospholipids (unsaturated archaeols) into 2,3-diphytanylglycerophospholipids (saturated archaeols) in the biosynthesis of archaeal membrane lipids. Catalyzes the formation of archaetidic acid (2,3-di-O-phytanyl-sn-glyceryl phosphate) from 2,3-di-O-geranylgeranylglyceryl phosphate (DGGGP) via the hydrogenation of each double bond of the isoprenoid chains. Is also probably able to reduce double bonds of geranyl groups in CDP-2,3-bis-O-(geranylgeranyl)-sn-glycerol and archaetidylserine, thus acting at various stages in the biosynthesis of archaeal membrane lipids. This is Digeranylgeranylglycerophospholipid reductase from Methanococcus aeolicus (strain ATCC BAA-1280 / DSM 17508 / OCM 812 / Nankai-3).